The following is a 166-amino-acid chain: ATP synthase subunit b (166 aa).

The chain crosses the membrane as a helical span at residues 8-28 (FSFGLFFWQALILVILILLLV).

This sequence belongs to the ATPase B chain family. As to quaternary structure, F-type ATPases have 2 components, F(1) - the catalytic core - and F(0) - the membrane proton channel. F(1) has five subunits: alpha(3), beta(3), gamma(1), delta(1), epsilon(1). F(0) has three main subunits: a(1), b(2) and c(10-14). The alpha and beta chains form an alternating ring which encloses part of the gamma chain. F(1) is attached to F(0) by a central stalk formed by the gamma and epsilon chains, while a peripheral stalk is formed by the delta and b chains.

It is found in the cell inner membrane. In terms of biological role, f(1)F(0) ATP synthase produces ATP from ADP in the presence of a proton or sodium gradient. F-type ATPases consist of two structural domains, F(1) containing the extramembraneous catalytic core and F(0) containing the membrane proton channel, linked together by a central stalk and a peripheral stalk. During catalysis, ATP synthesis in the catalytic domain of F(1) is coupled via a rotary mechanism of the central stalk subunits to proton translocation. Functionally, component of the F(0) channel, it forms part of the peripheral stalk, linking F(1) to F(0). This chain is ATP synthase subunit b, found in Flavobacterium johnsoniae (strain ATCC 17061 / DSM 2064 / JCM 8514 / BCRC 14874 / CCUG 350202 / NBRC 14942 / NCIMB 11054 / UW101) (Cytophaga johnsonae).